Consider the following 196-residue polypeptide: GTP cyclohydrolase 1 (196 aa).

Zn(2+)-binding residues include C85, H88, and C156.

It belongs to the GTP cyclohydrolase I family. In terms of assembly, toroid-shaped homodecamer, composed of two pentamers of five dimers.

The catalysed reaction is GTP + H2O = 7,8-dihydroneopterin 3'-triphosphate + formate + H(+). It functions in the pathway cofactor biosynthesis; 7,8-dihydroneopterin triphosphate biosynthesis; 7,8-dihydroneopterin triphosphate from GTP: step 1/1. The polypeptide is GTP cyclohydrolase 1 (Bacteroides thetaiotaomicron (strain ATCC 29148 / DSM 2079 / JCM 5827 / CCUG 10774 / NCTC 10582 / VPI-5482 / E50)).